The chain runs to 541 residues: Chaperonin GroEL (541 aa).

Residues 29-32, 86-90, glycine 413, and aspartate 495 contribute to the ATP site; these read TLGP and DGTTT.

As to quaternary structure, forms a cylinder of 14 subunits composed of two heptameric rings stacked back-to-back. Interacts with the co-chaperonin GroES.

The protein resides in the cytoplasm. It carries out the reaction ATP + H2O + a folded polypeptide = ADP + phosphate + an unfolded polypeptide.. Its function is as follows. Together with its co-chaperonin GroES, plays an essential role in assisting protein folding. The GroEL-GroES system forms a nano-cage that allows encapsulation of the non-native substrate proteins and provides a physical environment optimized to promote and accelerate protein folding. The chain is Chaperonin GroEL from Thermoanaerobacter brockii (Thermoanaerobium brockii).